Reading from the N-terminus, the 288-residue chain is Dichloromethane dehalogenase (288 aa).

The region spanning 12 to 94 (KTLRLLYHPA…YVNEKFDGAG (83 aa)) is the GST N-terminal domain. The region spanning 100 to 252 (GTQERAQINQ…ASMFKRKTAV (153 aa)) is the GST C-terminal domain.

Belongs to the GST superfamily. As to quaternary structure, homohexamer.

The protein localises to the cytoplasm. It catalyses the reaction dichloromethane + H2O = formaldehyde + 2 chloride + 2 H(+). It functions in the pathway xenobiotic degradation; dichloromethane degradation. The protein is Dichloromethane dehalogenase (dcmA) of Methylorubrum extorquens (strain DSM 6343 / CIP 106787 / DM4) (Methylobacterium extorquens).